Here is an 883-residue protein sequence, read N- to C-terminus: Phosphoenolpyruvate carboxylase (883 aa).

Active-site residues include H138 and K546.

The protein belongs to the PEPCase type 1 family. It depends on Mg(2+) as a cofactor.

It catalyses the reaction oxaloacetate + phosphate = phosphoenolpyruvate + hydrogencarbonate. Its function is as follows. Forms oxaloacetate, a four-carbon dicarboxylic acid source for the tricarboxylic acid cycle. This Salmonella paratyphi A (strain ATCC 9150 / SARB42) protein is Phosphoenolpyruvate carboxylase.